Here is a 301-residue protein sequence, read N- to C-terminus: MELISLFKQYLTVERQYSEKTVTAYLEDIDAFQKFLTDTGDKTDLLLVDRFDVNVYMSYLFDRHLARTSISRKVSALRSFYRFLVKNDLVDKNPFELVQLKKQSDKLPHFFYEKEMNMLFEAVYQAEGAQKLRNIAILEVLYGTGMRVSECAALQWSDIDFSMQTILVLGKGNKERYVPFGRYAKEALQNYRKNEWEPFLSKYKQTHNFVFINHYAKPITTTGIEYILNQVITASSLNGKIHPHMLRHSFATALLNNGADLRTVQELLGHSSLSTTQIYTHVTKEKLQESYRKYFPRSTDA.

In terms of domain architecture, Core-binding (CB) spans 1–85 (MELISLFKQY…ALRSFYRFLV (85 aa)). A Tyr recombinase domain is found at 106 to 292 (KLPHFFYEKE…TKEKLQESYR (187 aa)). Active-site residues include R147, K171, H244, R247, and H270. Catalysis depends on Y279, which acts as the O-(3'-phospho-DNA)-tyrosine intermediate.

Belongs to the 'phage' integrase family. XerC subfamily. As to quaternary structure, forms a cyclic heterotetrameric complex composed of two molecules of XerC and two molecules of XerD.

The protein resides in the cytoplasm. In terms of biological role, site-specific tyrosine recombinase, which acts by catalyzing the cutting and rejoining of the recombining DNA molecules. The XerC-XerD complex is essential to convert dimers of the bacterial chromosome into monomers to permit their segregation at cell division. It also contributes to the segregational stability of plasmids. The sequence is that of Tyrosine recombinase XerC from Pediococcus pentosaceus (strain ATCC 25745 / CCUG 21536 / LMG 10740 / 183-1w).